Here is a 615-residue protein sequence, read N- to C-terminus: Protein translocase subunit SecD (615 aa).

6 consecutive transmembrane segments (helical) span residues 10-30 (YVML…NLFG), 452-472 (QGLE…IIFY), 477-497 (LIAT…MSLL), 504-524 (MPGI…NVLI), 548-570 (GAFS…LYAV), and 585-605 (GVAT…NLLY).

The protein belongs to the SecD/SecF family. SecD subfamily. Forms a complex with SecF. Part of the essential Sec protein translocation apparatus which comprises SecA, SecYEG and auxiliary proteins SecDF-YajC and YidC.

Its subcellular location is the cell inner membrane. Functionally, part of the Sec protein translocase complex. Interacts with the SecYEG preprotein conducting channel. SecDF uses the proton motive force (PMF) to complete protein translocation after the ATP-dependent function of SecA. The chain is Protein translocase subunit SecD from Shigella flexneri.